Here is a 543-residue protein sequence, read N- to C-terminus: Glutamyl-tRNA(Gln) amidotransferase subunit A, chloroplastic/mitochondrial (543 aa).

Active-site charge relay system residues include Lys123 and Ser198. Ser222 (acyl-ester intermediate) is an active-site residue.

Belongs to the amidase family. GatA subfamily. Subunit of the heterotrimeric GatCAB amidotransferase (AdT) complex, composed of A, B and C subunits.

It is found in the mitochondrion. Its subcellular location is the plastid. The protein resides in the chloroplast stroma. It catalyses the reaction L-glutamyl-tRNA(Gln) + L-glutamine + ATP + H2O = L-glutaminyl-tRNA(Gln) + L-glutamate + ADP + phosphate + H(+). Its function is as follows. Allows the formation of correctly charged Gln-tRNA(Gln) through the transamidation of misacylated Glu-tRNA(Gln) in chloroplasts and mitochondria. The reaction takes place in the presence of glutamine and ATP through an activated gamma-phospho-Glu-tRNA(Gln). In Oryza sativa subsp. japonica (Rice), this protein is Glutamyl-tRNA(Gln) amidotransferase subunit A, chloroplastic/mitochondrial.